The following is a 1746-amino-acid chain: Non-reducing polyketide synthase ptaA (1746 aa).

Residues 4-227 (NSGSGTSPWG…ALPVYGGLCH (224 aa)) are N-terminal acylcarrier protein transacylase domain (SAT). One can recognise a Ketosynthase family 3 (KS3) domain in the interval 361–796 (QSKIAIVGMS…GGNTTIAIEE (436 aa)). Residues Cys-534, His-670, and His-714 each act as for beta-ketoacyl synthase activity in the active site. The malonyl-CoA:ACP transacylase (MAT) domain stretch occupies residues 898-1218 (FAFTGQGASY…LGALHLAGIP (321 aa)). The interval 1286-1605 (TSTVHRVIGE…RLLLDRFFSA (320 aa)) is product template (PT) domain. Residues 1290 to 1425 (HRVIGETFDG…ATLFYGKAND (136 aa)) are N-terminal hotdog fold. In terms of domain architecture, PKS/mFAS DH spans 1290–1600 (HRVIGETFDG…FRRYPRLLLD (311 aa)). The Proton acceptor; for dehydratase activity role is filled by His-1322. A C-terminal hotdog fold region spans residues 1452-1600 (VANRFSRNMA…FRRYPRLLLD (149 aa)). The active-site Proton donor; for dehydratase activity is Asp-1511. The 75-residue stretch at 1671-1745 (DSITVKAMAL…DLRAWLLEYY (75 aa)) folds into the Carrier domain. Ser-1705 bears the O-(pantetheine 4'-phosphoryl)serine mark.

The enzyme catalyses holo-[ACP] + 8 malonyl-CoA + 8 H(+) = atrochrysone carboxyl-[ACP] + 8 CO2 + 8 CoA + 2 H2O. The protein operates within secondary metabolite biosynthesis. Functionally, non-reducing polyketide synthase; part of the gene cluster that mediates the biosynthesis of pestheic acid, a diphenyl ether which is a biosynthetic precursor of the unique chloropupukeananes. The biosynthesis initiates from condensation of acetate and malonate units catalyzed by the non-reducing PKS ptaA. As the ptaA protein is TE/CLC domain-deficient, hydrolysis and Claisen cyclization of the polyketide could be catalyzed by ptaB containing a beta-lactamase domain. The ptaB protein might hydrolyze the thioester bond between the ACP of ptaA and the intermediate to release atrochrysone carboxylic acid, which is spontaneously dehydrated to form endocrocin anthrone. Endocrocin anthrone is then converted to endocrocin, catalyzed by the anthrone oxygenase ptaC. Spontaneous decarboxylation of endocrocin occurs to generate emodin. An O-methyltransferase (ptaH or ptaI) could methylate emodin to form physcion. PtaJ could then catalyze the oxidative cleavage of physcion, and rotation of the intermediate could then afford desmethylisosulochrin. PtaF, a putative NADH-dependent oxidoreductase, might also participate in the oxidative cleavage step. Desmethylisosulochrin is then transformed by another O-methyltransferase (ptaH or ptaI) to form isosulochrin. Chlorination of isosulochrin by ptaM in the cyclohexadienone B ring then produces chloroisosulochrin. PtaE is responsible for the oxidative coupling reactions of both benzophenones isosulochrin and chloroisosulochrin to RES-1214-1 and pestheic acid respectively, regardless of chlorination. This Pestalotiopsis fici (strain W106-1 / CGMCC3.15140) protein is Non-reducing polyketide synthase ptaA.